A 293-amino-acid chain; its full sequence is 4-hydroxy-tetrahydrodipicolinate synthase (293 aa).

Pyruvate is bound at residue threonine 47. The Proton donor/acceptor role is filled by tyrosine 135. The active-site Schiff-base intermediate with substrate is lysine 164. Residue isoleucine 205 coordinates pyruvate.

Belongs to the DapA family. In terms of assembly, homotetramer; dimer of dimers.

It is found in the cytoplasm. The catalysed reaction is L-aspartate 4-semialdehyde + pyruvate = (2S,4S)-4-hydroxy-2,3,4,5-tetrahydrodipicolinate + H2O + H(+). It functions in the pathway amino-acid biosynthesis; L-lysine biosynthesis via DAP pathway; (S)-tetrahydrodipicolinate from L-aspartate: step 3/4. In terms of biological role, catalyzes the condensation of (S)-aspartate-beta-semialdehyde [(S)-ASA] and pyruvate to 4-hydroxy-tetrahydrodipicolinate (HTPA). The protein is 4-hydroxy-tetrahydrodipicolinate synthase of Symbiobacterium thermophilum (strain DSM 24528 / JCM 14929 / IAM 14863 / T).